Reading from the N-terminus, the 551-residue chain is CTP synthase (551 aa).

The segment at 1–265 (MTRYLFITGG…DHIVAEKWGL (265 aa)) is amidoligase domain. S13 is a binding site for CTP. S13 is a binding site for UTP. ATP-binding positions include 14–19 (SLGKGI) and D71. Residues D71 and E139 each contribute to the Mg(2+) site. CTP-binding positions include 146 to 148 (DIE), 186 to 191 (KTKPTQ), and K222. UTP-binding positions include 186–191 (KTKPTQ) and K222. The Glutamine amidotransferase type-1 domain occupies 290–541 (TVAMVGKYVD…LRAAIAHRDG (252 aa)). G351 is a binding site for L-glutamine. C378 acts as the Nucleophile; for glutamine hydrolysis in catalysis. L-glutamine is bound by residues 379–382 (LGMQ), E402, and R469. Residues H514 and E516 contribute to the active site.

The protein belongs to the CTP synthase family. As to quaternary structure, homotetramer.

The enzyme catalyses UTP + L-glutamine + ATP + H2O = CTP + L-glutamate + ADP + phosphate + 2 H(+). It carries out the reaction L-glutamine + H2O = L-glutamate + NH4(+). The catalysed reaction is UTP + NH4(+) + ATP = CTP + ADP + phosphate + 2 H(+). The protein operates within pyrimidine metabolism; CTP biosynthesis via de novo pathway; CTP from UDP: step 2/2. Its activity is regulated as follows. Allosterically activated by GTP, when glutamine is the substrate; GTP has no effect on the reaction when ammonia is the substrate. The allosteric effector GTP functions by stabilizing the protein conformation that binds the tetrahedral intermediate(s) formed during glutamine hydrolysis. Inhibited by the product CTP, via allosteric rather than competitive inhibition. Catalyzes the ATP-dependent amination of UTP to CTP with either L-glutamine or ammonia as the source of nitrogen. Regulates intracellular CTP levels through interactions with the four ribonucleotide triphosphates. This chain is CTP synthase, found in Halorhodospira halophila (strain DSM 244 / SL1) (Ectothiorhodospira halophila (strain DSM 244 / SL1)).